Consider the following 489-residue polypeptide: Protein LMBR1L (489 aa).

Topologically, residues 1–21 (MEAPDYEVLSVREQLFHERIR) are extracellular. The interaction with LGB stretch occupies residues 1 to 59 (MEAPDYEVLSVREQLFHERIRECIISTLLFATLYILCHIFLTRFKKPAEFTTVDDEDAT). The tract at residues 1–76 (MEAPDYEVLS…LCTFTLAIAL (76 aa)) is LCN1-binding. The chain crosses the membrane as a helical span at residues 22–42 (ECIISTLLFATLYILCHIFLT). Residues 43 to 66 (RFKKPAEFTTVDDEDATVNKIALE) lie on the Cytoplasmic side of the membrane. The chain crosses the membrane as a helical span at residues 67–87 (LCTFTLAIALGAVLLLPFSII). The Extracellular portion of the chain corresponds to 88–114 (SNEVLLSLPRNYYIQWLNGSLIHGLWN). The chain crosses the membrane as a helical span at residues 115 to 135 (LVFLFSNLSLIFLMPFAYFFT). Residues 136–154 (ESEGFAGSRKGVLGRVYET) are Cytoplasmic-facing. The chain crosses the membrane as a helical span at residues 155 to 175 (VVMLMLLTLLVLGMVWVASAI). Over 176-196 (VDKNKANRESLYDFWEYYLPY) the chain is Extracellular. The chain crosses the membrane as a helical span at residues 197 to 217 (LYSCISFLGVLLLLVCTPLGL). Topologically, residues 218 to 305 (ARMFSVTGKL…NLGYPLAMLC (88 aa)) are cytoplasmic. The helical transmembrane segment at 306–326 (LLVLTGLSVLIVAIHILELLI) threads the bilayer. Over 327–350 (DEAAMPRGMQGTSLGQVSFSKLGS) the chain is Extracellular. The chain crosses the membrane as a helical span at residues 351 to 371 (FGAVIQVVLIFYLMVSSVVGF). Residues 372 to 388 (YSSPLFRSLRPRWHDTA) lie on the Cytoplasmic side of the membrane. Residues 389 to 409 (MTQIIGNCVCLLVLSSALPVF) traverse the membrane as a helical segment. Topologically, residues 410–431 (SRTLGLTRFDLLGDFGRFNWLG) are extracellular. A helical transmembrane segment spans residues 432 to 452 (NFYIVFLYNAAFAGLTTLCLV). The Cytoplasmic portion of the chain corresponds to 453 to 489 (KTFTAAVRAELIRAFGLDRLPLPVSGFPQASRKTQHQ).

This sequence belongs to the LIMR family. In terms of assembly, dimer. Can also form higher oligomers. Interacts with LCN1; this interaction mediates the endocytosis of LCN1. Interacts with UBAC2, FAF2, VCP, AMFR, ZNRF3, CTNNB1, LRP6, GSK3A and GSK3B. Interacts with DVL2 and RNF43. Interaction with SCGB1A1 has been observed in PubMed:16423471, but not in PubMed:23964685. Interaction with LGB which mediates the endocytosis of LGB has been observed in PubMed:17991420, but not in PubMed:23964685. Expressed in testis, pituitary gland, adrenal gland, trachea, placenta, thymus, cerebellum, stomach, mammary gland, spinal cord. A weaker expression is detected in colon, pancreas, and prostate.

The protein resides in the cell membrane. Its subcellular location is the endoplasmic reticulum membrane. Functionally, plays an essential role in lymphocyte development by negatively regulating the canonical Wnt signaling pathway. In association with UBAC2 and E3 ubiquitin-protein ligase AMFR, promotes the ubiquitin-mediated degradation of CTNNB1 and Wnt receptors FZD6 and LRP6. LMBR1L stabilizes the beta-catenin destruction complex that is required for regulating CTNNB1 levels. Acts as a LCN1 receptor and can mediate its endocytosis. This Homo sapiens (Human) protein is Protein LMBR1L (LMBR1L).